Here is a 151-residue protein sequence, read N- to C-terminus: Large ribosomal subunit protein bL9 (151 aa).

The protein belongs to the bacterial ribosomal protein bL9 family.

Functionally, binds to the 23S rRNA. The chain is Large ribosomal subunit protein bL9 from Francisella tularensis subsp. novicida (strain U112).